Consider the following 259-residue polypeptide: Global transcriptional regulator CodY (259 aa).

The GAF domain stretch occupies residues 1–155 (MDLLSKTRRI…GATVVGMEIL (155 aa)). Positions 203–222 (ASKIADRVGITRSVIVNALR) form a DNA-binding region, H-T-H motif.

It belongs to the CodY family.

It is found in the cytoplasm. DNA-binding global transcriptional regulator which is involved in the adaptive response to starvation and acts by directly or indirectly controlling the expression of numerous genes in response to nutrient availability. During rapid exponential growth, CodY is highly active and represses genes whose products allow adaptation to nutrient depletion. In Brevibacillus brevis (strain 47 / JCM 6285 / NBRC 100599), this protein is Global transcriptional regulator CodY.